A 732-amino-acid chain; its full sequence is Prolyl 3-hydroxylase 3 (732 aa).

An N-terminal signal peptide occupies residues 1–19 (MLRLLRLLLLLLLPPPGSP). The segment covering 15 to 25 (PPGSPEPPEPP) has biased composition (pro residues). The interval 15-35 (PPGSPEPPEPPGLAQLSPGSP) is disordered. 4 TPR repeats span residues 39-72 (PDLL…RAAL), 152-185 (REPY…NPTH), 214-247 (YWAA…SLAH), and 312-345 (LSQL…YPED). N-linked (GlcNAc...) asparagine glycosylation is found at Asn-327 and Asn-458. Positions 557-671 (THLVCRSAIE…RCALALWHTW (115 aa)) constitute a Fe2OG dioxygenase domain. His-580, Asp-582, and His-652 together coordinate Fe cation. The active site involves Arg-662. Positions 674-703 (EHSEQEWTEAKELLQEEEEEEEEEDILSRD) form a coiled coil. Basic and acidic residues predominate over residues 676 to 687 (SEQEWTEAKELL). The disordered stretch occupies residues 676–732 (SEQEWTEAKELLQEEEEEEEEEDILSRDPSPEPPSHKLQRVQEKAGKPRRVRVREEL). The span at 688–698 (QEEEEEEEEED) shows a compositional bias: acidic residues. Positions 722–732 (KPRRVRVREEL) are enriched in basic residues. Positions 729–732 (REEL) match the Prevents secretion from ER motif.

The protein belongs to the leprecan family. As to quaternary structure, identified in a complex with PLOD1 and P3H4. Fe cation is required as a cofactor. The cofactor is L-ascorbate. In terms of tissue distribution, detected in kidney (at protein level).

The protein resides in the endoplasmic reticulum. It catalyses the reaction L-prolyl-[collagen] + 2-oxoglutarate + O2 = trans-3-hydroxy-L-prolyl-[collagen] + succinate + CO2. Its function is as follows. Part of a complex composed of PLOD1, P3H3 and P3H4 that catalyzes hydroxylation of lysine residues in collagen alpha chains and is required for normal assembly and cross-linkling of collagen fibrils. Required for normal hydroxylation of lysine residues in type I collagen chains in skin, bone, tendon, aorta and cornea. Required for normal skin stability via its role in hydroxylation of lysine residues in collagen alpha chains and in collagen fibril assembly. Apparently not required for normal prolyl 3-hydroxylation on collagen chains, possibly because it functions redundantly with other prolyl 3-hydroxylases. The chain is Prolyl 3-hydroxylase 3 from Mus musculus (Mouse).